Here is an 85-residue protein sequence, read N- to C-terminus: Colicin E3 immunity protein (85 aa).

The protein belongs to the cloacin immunity protein family. As to quaternary structure, native colicin E3 is a 1:1 complex of A chain and protein B (Im3). Binds between the translocation and cytotoxic RNase domains of intact ColE3, blocking access to the 16S rRNA substrate. Forms a very tight 1:1 complex with the cytotoxic fragment (residues 456-551) of ColE3 (ceaC).

The cognate immunity protein for colicin E3 (ColE3), protects cells which harbor the plasmid ColE3 against the toxic action of ColE3. This protein inhibits the 16S RNA hydrolyzing activity of ColE3 by binding with very high affinity to the C-terminal catalytic domain of ColE3. In Escherichia coli, this protein is Colicin E3 immunity protein.